The sequence spans 480 residues: Protein nucleotidyltransferase YdiU (480 aa).

ATP is bound by residues glycine 86, glycine 88, arginine 89, lysine 109, aspartate 121, glycine 122, arginine 172, and arginine 179. The active-site Proton acceptor is the aspartate 248. The Mg(2+) site is built by asparagine 249 and aspartate 258. Residue aspartate 258 participates in ATP binding.

Belongs to the SELO family. Requires Mg(2+) as cofactor. It depends on Mn(2+) as a cofactor.

It catalyses the reaction L-seryl-[protein] + ATP = 3-O-(5'-adenylyl)-L-seryl-[protein] + diphosphate. The catalysed reaction is L-threonyl-[protein] + ATP = 3-O-(5'-adenylyl)-L-threonyl-[protein] + diphosphate. The enzyme catalyses L-tyrosyl-[protein] + ATP = O-(5'-adenylyl)-L-tyrosyl-[protein] + diphosphate. It carries out the reaction L-histidyl-[protein] + UTP = N(tele)-(5'-uridylyl)-L-histidyl-[protein] + diphosphate. It catalyses the reaction L-seryl-[protein] + UTP = O-(5'-uridylyl)-L-seryl-[protein] + diphosphate. The catalysed reaction is L-tyrosyl-[protein] + UTP = O-(5'-uridylyl)-L-tyrosyl-[protein] + diphosphate. Functionally, nucleotidyltransferase involved in the post-translational modification of proteins. It can catalyze the addition of adenosine monophosphate (AMP) or uridine monophosphate (UMP) to a protein, resulting in modifications known as AMPylation and UMPylation. This is Protein nucleotidyltransferase YdiU from Salmonella schwarzengrund (strain CVM19633).